A 387-amino-acid chain; its full sequence is Oleoyl-12-hydroxylase FAH12 (387 aa).

Residues 1-34 (MGGGGRMSTVITSNNSEKKGGSSHLKRAPHTKPP) form a disordered region. 2 helical membrane-spanning segments follow: residues 61-81 (AYDV…FPYI) and 88-108 (VAWL…WVIG). Residues 109 to 113 (HECGH) carry the Histidine box-1 motif. The helical transmembrane segment at 121–141 (LADDIVGLIVHSALLVPYFSW) threads the bilayer. Residues 145 to 149 (HRRHH) carry the Histidine box-2 motif. 3 helical membrane-spanning segments follow: residues 183-203 (VLTL…FNVS), 229-249 (IYIA…ATMA), and 253-273 (AWVM…LVMI). The Histidine box-3 motif lies at 319-323 (HVAHH).

This sequence belongs to the fatty acid desaturase type 1 family. As to expression, expressed in seeds. Barely detected in leaves.

Its subcellular location is the microsome membrane. It carries out the reaction a 1-acyl-2-(9Z)-octadecenoyl-sn-glycero-3-phosphocholine + 2 Fe(II)-[cytochrome b5] + O2 + 2 H(+) = a 1-acyl-2-[(R)-12-hydroxyoleoyl]-sn-glycero-3-phosphocholine + 2 Fe(III)-[cytochrome b5] + H2O. It participates in lipid metabolism; monounsaturated fatty acid biosynthesis. Its activity is regulated as follows. Inhibited by oleoyloxyethyl phosphocholine. Its function is as follows. Oleoyl-12-hydroxylase involved in the biosynthesis of ricinoleate (12-hydroxy-cis-9-octadecenoate), the major fatty acid constituent of the oil seeds from castor bean plants. Catalyzes the hydroxylation at the 12-position of 1-acyl-2-oleoyl-sn-glycero-3-phosphocholine (2-oleoyl-PC), which seems to be the actual physiological subtrate. It uses cytochrome b5 as an electron donor. May also be involved in the production of lesquerolic acid (14-hydroxyeicos-cis-ll-enoic acid) in vitro. This Ricinus communis (Castor bean) protein is Oleoyl-12-hydroxylase FAH12.